Consider the following 157-residue polypeptide: MYARLIAEKLLNHKLTIATAESVTGGLLSSSLTDIAGASRFFKGAIVAYSNELKKSLLNVKQSTLINHGAVSRYCVREMALGLMQKLNVDIAVACSGVAGPDALENQAVGSLFFCVIVANKAYDFETKLPAGSRNELRQLFVQKILQTVEHILSEIS.

The protein belongs to the CinA family.

The chain is Protein MG115 homolog from Mycoplasma pneumoniae (strain ATCC 29342 / M129 / Subtype 1) (Mycoplasmoides pneumoniae).